Reading from the N-terminus, the 403-residue chain is Phosphoglycerate kinase (403 aa).

Substrate is bound by residues 22-24 (DLN), R37, 60-63 (HLGR), R119, and R156. Residues K206, G302, E333, and 359–362 (GGDS) contribute to the ATP site.

Belongs to the phosphoglycerate kinase family. Monomer.

It localises to the cytoplasm. The catalysed reaction is (2R)-3-phosphoglycerate + ATP = (2R)-3-phospho-glyceroyl phosphate + ADP. It participates in carbohydrate degradation; glycolysis; pyruvate from D-glyceraldehyde 3-phosphate: step 2/5. The chain is Phosphoglycerate kinase (pgk) from Streptomyces coelicolor (strain ATCC BAA-471 / A3(2) / M145).